Reading from the N-terminus, the 202-residue chain is Heat shock 22 kDa protein, mitochondrial (202 aa).

Residues 1 to 31 (MASSLALKRFLSSGLLSSSFLRPVASSASRS) constitute a mitochondrion transit peptide. The sHSP domain maps to 94-202 (VLSAASRRGW…RNNVINVKVD (109 aa)).

Belongs to the small heat shock protein (HSP20) family.

Its subcellular location is the mitochondrion. In Pisum sativum (Garden pea), this protein is Heat shock 22 kDa protein, mitochondrial (HSP22).